Reading from the N-terminus, the 159-residue chain is Ribosomal RNA large subunit methyltransferase H (159 aa).

S-adenosyl-L-methionine-binding positions include Leu-76, Gly-108, and 127–132 (FGLLTL).

It belongs to the RNA methyltransferase RlmH family. In terms of assembly, homodimer.

It is found in the cytoplasm. It catalyses the reaction pseudouridine(1915) in 23S rRNA + S-adenosyl-L-methionine = N(3)-methylpseudouridine(1915) in 23S rRNA + S-adenosyl-L-homocysteine + H(+). In terms of biological role, specifically methylates the pseudouridine at position 1915 (m3Psi1915) in 23S rRNA. This Streptococcus pyogenes serotype M12 (strain MGAS2096) protein is Ribosomal RNA large subunit methyltransferase H.